Here is a 74-residue protein sequence, read N- to C-terminus: MLVFYALLFVTVFSNTVMGATIDKPIPKPILREAIEEIEVNKRADSHYCKEENCPPGKHCPEVPIACVYGPCCF.

The signal sequence occupies residues 1–19 (MLVFYALLFVTVFSNTVMG). Positions 20-41 (ATIDKPIPKPILREAIEEIEVN) are excised as a propeptide.

Belongs to the scoloptoxin-07 family. Contains 3 disulfide bonds. Expressed by the venom gland.

It is found in the secreted. Functionally, inhibits voltage-gated potassium channels. This Scolopendra mutilans (Chinese red-headed centipede) protein is Kappa-scoloptoxin(07)-Ssm2d.